Here is a 234-residue protein sequence, read N- to C-terminus: Large ribosomal subunit protein uL1 (234 aa).

The protein belongs to the universal ribosomal protein uL1 family. In terms of assembly, part of the 50S ribosomal subunit.

In terms of biological role, binds directly to 23S rRNA. The L1 stalk is quite mobile in the ribosome, and is involved in E site tRNA release. Functionally, protein L1 is also a translational repressor protein, it controls the translation of the L11 operon by binding to its mRNA. The chain is Large ribosomal subunit protein uL1 from Helicobacter pylori (strain Shi470).